Reading from the N-terminus, the 399-residue chain is Flavohemoprotein (399 aa).

One can recognise a Globin domain in the interval 1 to 138 (MLDNKTIEII…IADAFIGIEK (138 aa)). H85 is a binding site for heme b. Active-site charge relay system residues include Y95 and E137. Residues 149–399 (GGWKEYKPFV…GPQLSLAQSV (251 aa)) are reductase. Positions 152–255 (KEYKPFVIAK…SAPAGDFVLD (104 aa)) constitute an FAD-binding FR-type domain. FAD is bound by residues Y190 and 206–209 (RQYS). Position 268-273 (268-273 (GVGITP)) interacts with NADP(+). Residue 388–391 (LFGP) coordinates FAD.

The protein belongs to the globin family. Two-domain flavohemoproteins subfamily. In the C-terminal section; belongs to the flavoprotein pyridine nucleotide cytochrome reductase family. Requires heme b as cofactor. It depends on FAD as a cofactor.

The catalysed reaction is 2 nitric oxide + NADPH + 2 O2 = 2 nitrate + NADP(+) + H(+). It catalyses the reaction 2 nitric oxide + NADH + 2 O2 = 2 nitrate + NAD(+) + H(+). Functionally, is involved in NO detoxification in an aerobic process, termed nitric oxide dioxygenase (NOD) reaction that utilizes O(2) and NAD(P)H to convert NO to nitrate, which protects the bacterium from various noxious nitrogen compounds. Therefore, plays a central role in the inducible response to nitrosative stress. This is Flavohemoprotein (hmp) from Bacillus subtilis (strain 168).